Here is a 481-residue protein sequence, read N- to C-terminus: G-protein coupled receptor 37-like 1 (481 aa).

The first 24 residues, M1–G24, serve as a signal peptide directing secretion. Residues A25 to M134 lie on the Extracellular side of the membrane. Disordered regions lie at residues L30–E55 and L76–T107. Residues T95 to T107 are compositionally biased toward polar residues. A glycan (N-linked (GlcNAc...) asparagine) is linked at N105. A helical membrane pass occupies residues L135 to V155. The Cytoplasmic portion of the chain corresponds to W156–S167. A helical transmembrane segment spans residues I168 to I188. Topologically, residues F189 to A205 are extracellular. C203 and C286 are disulfide-bonded. The chain crosses the membrane as a helical span at residues V206 to I226. The Cytoplasmic segment spans residues D227–K251. A helical membrane pass occupies residues L252–L272. Topologically, residues A273–M310 are extracellular. The chain crosses the membrane as a helical span at residues W311 to V331. Residues T332–T360 are Cytoplasmic-facing. A helical membrane pass occupies residues V361–V381. The Extracellular segment spans residues V382–G398. The chain crosses the membrane as a helical span at residues L399 to I419. The Cytoplasmic portion of the chain corresponds to C420–C481. Phosphoserine is present on S471. A Phosphothreonine modification is found at T479.

Belongs to the G-protein coupled receptor 1 family. In terms of assembly, interacts with the PTCH1 receptor. Undergoes metalloprotease-mediated cleavage which reduces its constitutive activity. Post-translationally, ubiquitinated. Highly expressed in brain.

The protein localises to the cell membrane. Its subcellular location is the cell projection. It localises to the cilium membrane. In terms of biological role, G-protein coupled receptor. Has been shown to bind the neuroprotective and glioprotective factor prosaposin (PSAP), leading to endocytosis followed by an ERK phosphorylation cascade. However, other studies have shown that prosaposin does not increase activity. It has been suggested that GPR37L1 is a constitutively active receptor which signals through the guanine nucleotide-binding protein G(s) subunit alpha. Participates in the regulation of postnatal cerebellar development by modulating the Shh pathway. Regulates baseline blood pressure in females and protects against cardiovascular stress in males. Mediates inhibition of astrocyte glutamate transporters and reduction in neuronal N-methyl-D-aspartate receptor activity. This chain is G-protein coupled receptor 37-like 1 (Gpr37l1), found in Rattus norvegicus (Rat).